Here is a 115-residue protein sequence, read N- to C-terminus: NAD(P)H-quinone oxidoreductase subunit M (115 aa).

This sequence belongs to the complex I NdhM subunit family. As to quaternary structure, NDH-1 can be composed of about 15 different subunits; different subcomplexes with different compositions have been identified which probably have different functions.

The protein resides in the cellular thylakoid membrane. The enzyme catalyses a plastoquinone + NADH + (n+1) H(+)(in) = a plastoquinol + NAD(+) + n H(+)(out). It carries out the reaction a plastoquinone + NADPH + (n+1) H(+)(in) = a plastoquinol + NADP(+) + n H(+)(out). In terms of biological role, NDH-1 shuttles electrons from an unknown electron donor, via FMN and iron-sulfur (Fe-S) centers, to quinones in the respiratory and/or the photosynthetic chain. The immediate electron acceptor for the enzyme in this species is believed to be plastoquinone. Couples the redox reaction to proton translocation, and thus conserves the redox energy in a proton gradient. Cyanobacterial NDH-1 also plays a role in inorganic carbon-concentration. This Prochlorococcus marinus (strain MIT 9211) protein is NAD(P)H-quinone oxidoreductase subunit M.